The sequence spans 272 residues: Protein UL24 homolog (272 aa).

It belongs to the herpesviridae UL24 family.

The protein localises to the virion. It is found in the host cytoplasm. Its subcellular location is the host nucleus. The protein resides in the host nucleolus. It localises to the host Golgi apparatus. In terms of biological role, may participate in nuclear egress of viral particles. Plays a role in the dispersal of several host nucleolar proteins including NCL/nucleolin and NPM1. Since deletion of host NCL/nucleolin negatively impact on nuclear egress, UL24 supposedly acts on this process through its effect on host nucleoli. In Equine herpesvirus 1 (strain V592) (EHV-1), this protein is Protein UL24 homolog.